We begin with the raw amino-acid sequence, 297 residues long: Zinc finger protein 784 (297 aa).

Residues 1–12 (MAAARPDPPIPS) are compositionally biased toward pro residues. The segment at 1–39 (MAAARPDPPIPSSPTRESPSPEPPDLVLVPDGRPVTPPG) is disordered. The residue at position 13 (Ser-13) is a Phosphoserine. 3 consecutive C2H2-type zinc fingers follow at residues 64–86 (FHCALCPAAFRLVSELLFHEHGH), 100–122 (SRCHVCGHSCPGPASLRAHYSLH), and 128–150 (YRCSLCPRAFKALAPLLRHQHRH). Positions 149–175 (RHGVEPGTSERLLPTTTTGQPNSRVAQ) are disordered. Residues 162–173 (PTTTTGQPNSRV) show a composition bias toward polar residues. C2H2-type zinc fingers lie at residues 195 to 217 (FACRFCAKPFRRSSDMRDHERVH), 223 to 245 (YHCSICGKGFTQSSVLSGHARIH), and 251 to 273 (FRCMLCDRTFNNSSNFRKHQRTH). Residues 268–297 (KHQRTHFHGPGSGVGESRGQLRSSSVSQES) are disordered. Positions 287-297 (QLRSSSVSQES) are enriched in polar residues.

The protein belongs to the krueppel C2H2-type zinc-finger protein family.

The protein resides in the nucleus. Its function is as follows. May be involved in transcriptional regulation. This is Zinc finger protein 784 (Znf784) from Mus musculus (Mouse).